The sequence spans 236 residues: Ribonuclease 3 (236 aa).

Positions 7–136 (KSYILKKFNI…FIGALYLDQG (130 aa)) constitute an RNase III domain. Glu49 is a binding site for Mg(2+). Residue Asp53 is part of the active site. Mg(2+) contacts are provided by Asp122 and Glu125. Glu125 is an active-site residue. Positions 162-232 (DFKSRLQERL…ARAALKILED (71 aa)) constitute a DRBM domain.

It belongs to the ribonuclease III family. Homodimer. The cofactor is Mg(2+).

Its subcellular location is the cytoplasm. It catalyses the reaction Endonucleolytic cleavage to 5'-phosphomonoester.. Its function is as follows. Digests double-stranded RNA. Involved in the processing of primary rRNA transcript to yield the immediate precursors to the large and small rRNAs (23S and 16S). Processes some mRNAs, and tRNAs when they are encoded in the rRNA operon. Processes pre-crRNA and tracrRNA of type II CRISPR loci if present in the organism. This Leuconostoc mesenteroides subsp. mesenteroides (strain ATCC 8293 / DSM 20343 / BCRC 11652 / CCM 1803 / JCM 6124 / NCDO 523 / NBRC 100496 / NCIMB 8023 / NCTC 12954 / NRRL B-1118 / 37Y) protein is Ribonuclease 3.